Here is a 453-residue protein sequence, read N- to C-terminus: HTH-type pyridoxine biosynthesis transcriptional regulator PdxR (453 aa).

The 69-residue stretch at 15 to 83 folds into the HTH gntR-type domain; it reads TSIPTQLTEQ…RGSGTTINPD (69 aa). Positions 43–62 form a DNA-binding region, H-T-H motif; sequence SRSLSTQLGVSRGSVVTAYD.

The protein in the C-terminal section; belongs to the class-I pyridoxal-phosphate-dependent aminotransferase family. It depends on pyridoxal 5'-phosphate as a cofactor.

Functionally, may have a regulatory function in pyridoxine biosynthesis. Is said to also have an aminotransferase activity in valine biosynthesis as a double inactivation of ilvE and pdxR results in an auxotrophic requirement for valine. The sequence is that of HTH-type pyridoxine biosynthesis transcriptional regulator PdxR (pdxR) from Corynebacterium glutamicum (strain ATCC 13032 / DSM 20300 / JCM 1318 / BCRC 11384 / CCUG 27702 / LMG 3730 / NBRC 12168 / NCIMB 10025 / NRRL B-2784 / 534).